Here is a 448-residue protein sequence, read N- to C-terminus: Probable glycine dehydrogenase (decarboxylating) subunit 1 (448 aa).

This sequence belongs to the GcvP family. N-terminal subunit subfamily. The glycine cleavage system is composed of four proteins: P, T, L and H. In this organism, the P 'protein' is a heterodimer of two subunits.

The catalysed reaction is N(6)-[(R)-lipoyl]-L-lysyl-[glycine-cleavage complex H protein] + glycine + H(+) = N(6)-[(R)-S(8)-aminomethyldihydrolipoyl]-L-lysyl-[glycine-cleavage complex H protein] + CO2. The glycine cleavage system catalyzes the degradation of glycine. The P protein binds the alpha-amino group of glycine through its pyridoxal phosphate cofactor; CO(2) is released and the remaining methylamine moiety is then transferred to the lipoamide cofactor of the H protein. This is Probable glycine dehydrogenase (decarboxylating) subunit 1 from Exiguobacterium sibiricum (strain DSM 17290 / CCUG 55495 / CIP 109462 / JCM 13490 / 255-15).